Here is a 327-residue protein sequence, read N- to C-terminus: Beta-ketoacyl-[acyl-carrier-protein] synthase III 2 (327 aa).

Catalysis depends on residues cysteine 114 and histidine 251. Residues 252–256 form an ACP-binding region; that stretch reads SANLR. The active site involves asparagine 281.

The protein belongs to the thiolase-like superfamily. FabH family. As to quaternary structure, homodimer.

Its subcellular location is the cytoplasm. It carries out the reaction malonyl-[ACP] + acetyl-CoA + H(+) = 3-oxobutanoyl-[ACP] + CO2 + CoA. It participates in lipid metabolism; fatty acid biosynthesis. Catalyzes the condensation reaction of fatty acid synthesis by the addition to an acyl acceptor of two carbons from malonyl-ACP. Catalyzes the first condensation reaction which initiates fatty acid synthesis and may therefore play a role in governing the total rate of fatty acid production. Possesses both acetoacetyl-ACP synthase and acetyl transacylase activities. Its substrate specificity determines the biosynthesis of branched-chain and/or straight-chain of fatty acids. In Bacillus cereus (strain ATCC 14579 / DSM 31 / CCUG 7414 / JCM 2152 / NBRC 15305 / NCIMB 9373 / NCTC 2599 / NRRL B-3711), this protein is Beta-ketoacyl-[acyl-carrier-protein] synthase III 2.